The chain runs to 150 residues: Large ribosomal subunit protein bL9 (150 aa).

The protein belongs to the bacterial ribosomal protein bL9 family.

In terms of biological role, binds to the 23S rRNA. The chain is Large ribosomal subunit protein bL9 from Shewanella baltica (strain OS223).